A 288-amino-acid polypeptide reads, in one-letter code: Adenylate kinase (288 aa).

Residue 65–70 (GVGKGT) coordinates ATP. The segment at 85–114 (ATGDLVRDELKSSGPLSKQLAEIVNQGKLV) is NMP. AMP-binding positions include threonine 86, arginine 91, 112-114 (KLV), 142-145 (GFPR), and glutamine 149. Residues 178 to 226 (GRRICSECGKNFNVASIDVAGENGAPRISMARLNPPFTVCFKLITRADD) form an LID region. Arginine 179 serves as a coordination point for ATP. The AMP site is built by arginine 223 and arginine 234. Position 262 (glycine 262) interacts with ATP.

It belongs to the adenylate kinase family. As to quaternary structure, monomer.

It is found in the cytoplasm. It carries out the reaction AMP + ATP = 2 ADP. In terms of biological role, catalyzes the reversible transfer of the terminal phosphate group between ATP and AMP. Plays an important role in cellular energy homeostasis and in adenine nucleotide metabolism. This Solanum tuberosum (Potato) protein is Adenylate kinase (ADK).